Reading from the N-terminus, the 108-residue chain is Nucleoid-associated protein Lcho_1975 (108 aa).

Belongs to the YbaB/EbfC family. Homodimer.

It localises to the cytoplasm. It is found in the nucleoid. Binds to DNA and alters its conformation. May be involved in regulation of gene expression, nucleoid organization and DNA protection. This chain is Nucleoid-associated protein Lcho_1975, found in Leptothrix cholodnii (strain ATCC 51168 / LMG 8142 / SP-6) (Leptothrix discophora (strain SP-6)).